The primary structure comprises 547 residues: Glucose-6-phosphate isomerase (547 aa).

Residue Glu-352 is the Proton donor of the active site. Active-site residues include His-383 and Lys-511.

Belongs to the GPI family.

It is found in the cytoplasm. The enzyme catalyses alpha-D-glucose 6-phosphate = beta-D-fructose 6-phosphate. It participates in carbohydrate biosynthesis; gluconeogenesis. It functions in the pathway carbohydrate degradation; glycolysis; D-glyceraldehyde 3-phosphate and glycerone phosphate from D-glucose: step 2/4. Catalyzes the reversible isomerization of glucose-6-phosphate to fructose-6-phosphate. In Rhodospirillum rubrum (strain ATCC 11170 / ATH 1.1.1 / DSM 467 / LMG 4362 / NCIMB 8255 / S1), this protein is Glucose-6-phosphate isomerase.